The primary structure comprises 292 residues: Syntenin-2 (292 aa).

2 consecutive PDZ domains span residues 108-187 (EIHL…IRDR) and 192-267 (TVTM…IPTV).

Monomer and homodimer. Interacts with SDCBP. Interacts with TM4SF1.

The protein localises to the cytoplasm. It is found in the nucleus. Its subcellular location is the nucleolus. It localises to the nucleoplasm. The protein resides in the cell membrane. The protein localises to the nucleus speckle. Binds phosphatidylinositol 4,5-bisphosphate (PIP2). May play a role in the organization of nuclear PIP2, cell division and cell survival. The sequence is that of Syntenin-2 (Sdcbp2) from Mus musculus (Mouse).